A 449-amino-acid chain; its full sequence is Rubisco accumulation factor 1.2, chloroplastic (449 aa).

The N-terminal 61 residues, 1–61, are a transit peptide targeting the chloroplast; the sequence is MFSLKSLISS…NMIPKNPPAR (61 aa). Residues 75-264 are N-terminal alpha-helix; that stretch reads IPTQFRSLDS…KAKNRLNTEL (190 aa). Positions 262–288 form a coiled coil; that stretch reads TELYGDKEAEKEKEKKKKEEEVKAIRI. The tract at residues 288-434 is C-terminal beta sheet; it reads IPVVRLKFGE…GMVVLVVRPP (147 aa).

The protein belongs to the RAF family. Homodimer.

The protein resides in the plastid. Its subcellular location is the chloroplast. In terms of biological role, required for assembly or stability of RuBisCO. Acts at a postchaperonin step to fold and/or assemble the large subunit (rbcL) into RuBisCO. RAF1 brackets an rbcL dimer (rbcL(2)), leading to rbcL(8)-RAF1(4) complex formation. In the next step, RBCS displaces RAF1, thus resulting in holoenzyme formation. The sequence is that of Rubisco accumulation factor 1.2, chloroplastic from Arabidopsis thaliana (Mouse-ear cress).